Consider the following 477-residue polypeptide: Ribulose bisphosphate carboxylase large chain (477 aa).

Residues 1–2 (MS) constitute a propeptide that is removed on maturation. Pro-3 is modified (N-acetylproline). Position 14 is an N6,N6,N6-trimethyllysine (Lys-14). Asn-123 and Thr-173 together coordinate substrate. The active-site Proton acceptor is the Lys-175. Lys-177 provides a ligand contact to substrate. Lys-201, Asp-203, and Glu-204 together coordinate Mg(2+). N6-carboxylysine is present on Lys-201. His-294 acts as the Proton acceptor in catalysis. 3 residues coordinate substrate: Arg-295, His-327, and Ser-379.

Belongs to the RuBisCO large chain family. Type I subfamily. In terms of assembly, heterohexadecamer of 8 large chains and 8 small chains; disulfide-linked. The disulfide link is formed within the large subunit homodimers. It depends on Mg(2+) as a cofactor. In terms of processing, the disulfide bond which can form in the large chain dimeric partners within the hexadecamer appears to be associated with oxidative stress and protein turnover.

It is found in the plastid. The protein localises to the chloroplast. The catalysed reaction is 2 (2R)-3-phosphoglycerate + 2 H(+) = D-ribulose 1,5-bisphosphate + CO2 + H2O. It carries out the reaction D-ribulose 1,5-bisphosphate + O2 = 2-phosphoglycolate + (2R)-3-phosphoglycerate + 2 H(+). RuBisCO catalyzes two reactions: the carboxylation of D-ribulose 1,5-bisphosphate, the primary event in carbon dioxide fixation, as well as the oxidative fragmentation of the pentose substrate in the photorespiration process. Both reactions occur simultaneously and in competition at the same active site. The chain is Ribulose bisphosphate carboxylase large chain from Solanum bulbocastanum (Wild potato).